The primary structure comprises 793 residues: Protein PAT1 homolog (793 aa).

2 positions are modified to phosphoserine: Ser200 and Ser208. Disordered regions lie at residues 203–256 (PPGS…TGNR) and 292–312 (MLQQPPHQNGLMPPQMQGSQN). A compositionally biased stretch (polar residues) spans 219 to 242 (PYQSGGPQMGSPNFSPFPNLQPQL). 2 positions are modified to phosphoserine: Ser342 and Ser343. The interval 476–501 (RPLLEVDPPNSAKFGNAEHKPTDKPL) is disordered. The span at 491 to 501 (NAEHKPTDKPL) shows a compositional bias: basic and acidic residues.

In terms of assembly, interacts with MPK4 and SUMM2. In terms of processing, phosphorylated at Ser-208 by MPK4 upon flg22 elicitation. Phosphorylated at Ser-200, Ser-342 and Ser-343 upon flg22 elicitation.

It localises to the cytoplasm. Its subcellular location is the P-body. Functionally, activator of mRNA decapping. Involved in mRNA decay via decapping. Involved in disease resistance in response to biotrophic and necrotrophic pathogens. Is part of a signaling pathway including MPK4 and the disease resistance protein SUMM2. This Arabidopsis thaliana (Mouse-ear cress) protein is Protein PAT1 homolog.